The following is a 140-amino-acid chain: UPF0134 protein MPN_094 (140 aa).

Belongs to the UPF0134 family.

The sequence is that of UPF0134 protein MPN_094 from Mycoplasma pneumoniae (strain ATCC 29342 / M129 / Subtype 1) (Mycoplasmoides pneumoniae).